Reading from the N-terminus, the 269-residue chain is 3-methyl-2-oxobutanoate hydroxymethyltransferase (269 aa).

Mg(2+)-binding residues include Asp50 and Asp89. Residues 50–51 (DS), Asp89, and Lys118 each bind 3-methyl-2-oxobutanoate. Glu120 is a Mg(2+) binding site. Glu187 functions as the Proton acceptor in the catalytic mechanism.

The protein belongs to the PanB family. As to quaternary structure, homodecamer; pentamer of dimers. It depends on Mg(2+) as a cofactor.

Its subcellular location is the cytoplasm. It catalyses the reaction 3-methyl-2-oxobutanoate + (6R)-5,10-methylene-5,6,7,8-tetrahydrofolate + H2O = 2-dehydropantoate + (6S)-5,6,7,8-tetrahydrofolate. The protein operates within cofactor biosynthesis; (R)-pantothenate biosynthesis; (R)-pantoate from 3-methyl-2-oxobutanoate: step 1/2. Catalyzes the reversible reaction in which hydroxymethyl group from 5,10-methylenetetrahydrofolate is transferred onto alpha-ketoisovalerate to form ketopantoate. This chain is 3-methyl-2-oxobutanoate hydroxymethyltransferase, found in Nitrosomonas eutropha (strain DSM 101675 / C91 / Nm57).